A 439-amino-acid polypeptide reads, in one-letter code: 3-phosphoshikimate 1-carboxyvinyltransferase (439 aa).

2 residues coordinate 3-phosphoshikimate: lysine 29 and arginine 34. Lysine 29 is a binding site for phosphoenolpyruvate. 2 residues coordinate phosphoenolpyruvate: glycine 99 and arginine 128. 3-phosphoshikimate is bound by residues serine 171, serine 172, glutamine 173, serine 199, aspartate 316, and lysine 343. Glutamine 173 is a binding site for phosphoenolpyruvate. The active-site Proton acceptor is aspartate 316. 3 residues coordinate phosphoenolpyruvate: arginine 347, arginine 390, and lysine 416.

The protein belongs to the EPSP synthase family. In terms of assembly, monomer.

The protein resides in the cytoplasm. The enzyme catalyses 3-phosphoshikimate + phosphoenolpyruvate = 5-O-(1-carboxyvinyl)-3-phosphoshikimate + phosphate. The protein operates within metabolic intermediate biosynthesis; chorismate biosynthesis; chorismate from D-erythrose 4-phosphate and phosphoenolpyruvate: step 6/7. In terms of biological role, catalyzes the transfer of the enolpyruvyl moiety of phosphoenolpyruvate (PEP) to the 5-hydroxyl of shikimate-3-phosphate (S3P) to produce enolpyruvyl shikimate-3-phosphate and inorganic phosphate. In Deinococcus radiodurans (strain ATCC 13939 / DSM 20539 / JCM 16871 / CCUG 27074 / LMG 4051 / NBRC 15346 / NCIMB 9279 / VKM B-1422 / R1), this protein is 3-phosphoshikimate 1-carboxyvinyltransferase.